The sequence spans 235 residues: Large ribosomal subunit protein bL25 (235 aa).

Positions 201–235 are disordered; the sequence is PVAEAKGKGKAAKPAATAKPAAAAAKPAAKPKAKK. Residues 212-228 are compositionally biased toward low complexity; sequence AKPAATAKPAAAAAKPA.

Belongs to the bacterial ribosomal protein bL25 family. CTC subfamily. In terms of assembly, part of the 50S ribosomal subunit; part of the 5S rRNA/L5/L18/L25 subcomplex. Contacts the 5S rRNA. Binds to the 5S rRNA independently of L5 and L18.

Functionally, this is one of the proteins that binds to the 5S RNA in the ribosome where it forms part of the central protuberance. The chain is Large ribosomal subunit protein bL25 from Verminephrobacter eiseniae (strain EF01-2).